Reading from the N-terminus, the 156-residue chain is Ribosomal RNA large subunit methyltransferase H (156 aa).

S-adenosyl-L-methionine-binding positions include leucine 73, glycine 104, and 123-128; that span reads ISSMTL.

It belongs to the RNA methyltransferase RlmH family. As to quaternary structure, homodimer.

The protein resides in the cytoplasm. The catalysed reaction is pseudouridine(1915) in 23S rRNA + S-adenosyl-L-methionine = N(3)-methylpseudouridine(1915) in 23S rRNA + S-adenosyl-L-homocysteine + H(+). In terms of biological role, specifically methylates the pseudouridine at position 1915 (m3Psi1915) in 23S rRNA. This is Ribosomal RNA large subunit methyltransferase H from Burkholderia cenocepacia (strain HI2424).